The sequence spans 262 residues: Cap-specific mRNA (nucleoside-2'-O-)-methyltransferase (262 aa).

In terms of domain architecture, RrmJ-type SAM-dependent 2'-O-MTase spans 34–226 (TRRPRCWRKL…ERYLICFNKL (193 aa)). Residues Gly-67 and Asp-140 each coordinate S-adenosyl-L-methionine. Lys-180 serves as the catalytic Proton acceptor.

It carries out the reaction a 5'-end (N(7)-methyl 5'-triphosphoguanosine)-ribonucleoside in mRNA + S-adenosyl-L-methionine = a 5'-end (N(7)-methyl 5'-triphosphoguanosine)-(2'-O-methyl-ribonucleoside) in mRNA + S-adenosyl-L-homocysteine + H(+). Its function is as follows. S-adenosyl-L-methionine-dependent methyltransferase that mediates mRNA cap 2'-O-ribose methylation to the 5'-cap structure of late viral transcripts. The polypeptide is Cap-specific mRNA (nucleoside-2'-O-)-methyltransferase (Lepidoptera (butterflies and moths)).